The following is a 309-amino-acid chain: G-protein coupled receptor 35 (309 aa).

Over 1 to 24 the chain is Extracellular; sequence MNGTYNTCGSSDLTWPPAIKLGFY. Asn-2 is a glycosylation site (N-linked (GlcNAc...) asparagine). The helical transmembrane segment at 25-45 threads the bilayer; it reads AYLGVLLVLGLLLNSLALWVF. The Cytoplasmic segment spans residues 46–56; that stretch reads CCRMQQWTETR. Residues 57–77 form a helical membrane-spanning segment; the sequence is IYMTNLAVADLCLLCTLPFVL. The Extracellular portion of the chain corresponds to 78–90; that stretch reads HSLRDTSDTPLCQ. Cys-89 and Cys-162 are joined by a disulfide. Residues 91-112 traverse the membrane as a helical segment; that stretch reads LSQGIYLTNRYMSISLVTAIAV. At 113 to 135 the chain is on the cytoplasmic side; it reads DRYVAVRHPLRARGLRSPRQAAA. A helical membrane pass occupies residues 136 to 156; it reads VCAVLWVLVIGSLVARWLLGI. The Extracellular portion of the chain corresponds to 157-174; that stretch reads QEGGFCFRSTRHNFNSMA. The helical transmembrane segment at 175–195 threads the bilayer; sequence FPLLGFYLPLAVVVFCSLKVV. Over 196-218 the chain is Cytoplasmic; the sequence is TALAQRPPTDVGQAEATRKAARM. Residues 219 to 239 traverse the membrane as a helical segment; sequence VWANLLVFVVCFLPLHVGLTV. Over 240-258 the chain is Extracellular; it reads RLAVGWNACALLETIRRAL. The chain crosses the membrane as a helical span at residues 259-279; the sequence is YITSKLSDANCCLDAICYYYM. Over 280-309 the chain is Cytoplasmic; that stretch reads AKEFQEASALAVAPSAKAHKSQDSLCVTLA. Phosphoserine is present on residues Ser-287 and Ser-294. Phosphoserine; by GRK5 and GRK6 occurs at positions 300 and 303. Thr-307 carries the phosphothreonine modification.

This sequence belongs to the G-protein coupled receptor 1 family. Interacts with GNA13. Interacts with ARRB2. Post-translationally, multiply phosphorylated in clusters of serines and threonines in the C-terminal tail. Phosphorylation of Ser-300 and Ser-303 is mediated by GRK5 and/or GRK6. In terms of tissue distribution, predominantly expressed in immune and gastrointestinal tissues.

It localises to the cell membrane. G-protein coupled receptor that binds to several ligands including the tryptophan metabolite kynurenic acid (KYNA), lysophosphatidic acid (LPA) or 5-hydroxyindoleacetic acid (5-HIAA) with high affinity, leading to rapid and transient activation of numerous intracellular signaling pathways. Plays a role in neutrophil recruitment to sites of inflammation and bacterial clearance through the major serotonin metabolite 5-HIAA that acts as a physiological ligand. Stimulates lipid metabolism, thermogenic, and anti-inflammatory gene expression in adipose tissue once activated by kynurenic acid. In macrophages, activation by lysophosphatidic acid promotes GPR35-induced signaling with a distinct transcriptional profile characterized by TNF production associated with ERK and NF-kappa-B activation. In turn, induces chemotaxis of macrophages. The protein is G-protein coupled receptor 35 (GPR35) of Homo sapiens (Human).